The sequence spans 608 residues: Elongation factor 4 (608 aa).

The 183-residue stretch at 11-193 (KKIRNFSIIA…QIVEKVPEPS (183 aa)) folds into the tr-type G domain. GTP is bound by residues 23–28 (DHGKST) and 140–143 (NKID).

Belongs to the TRAFAC class translation factor GTPase superfamily. Classic translation factor GTPase family. LepA subfamily.

It is found in the cell membrane. The enzyme catalyses GTP + H2O = GDP + phosphate + H(+). Its function is as follows. Required for accurate and efficient protein synthesis under certain stress conditions. May act as a fidelity factor of the translation reaction, by catalyzing a one-codon backward translocation of tRNAs on improperly translocated ribosomes. Back-translocation proceeds from a post-translocation (POST) complex to a pre-translocation (PRE) complex, thus giving elongation factor G a second chance to translocate the tRNAs correctly. Binds to ribosomes in a GTP-dependent manner. The chain is Elongation factor 4 from Listeria innocua serovar 6a (strain ATCC BAA-680 / CLIP 11262).